An 883-amino-acid polypeptide reads, in one-letter code: UTP--glucose-1-phosphate uridylyltransferase 3, chloroplastic (883 aa).

Residues 1 to 72 (MANPQASPIL…HQVRHVSTVP (72 aa)) constitute a chloroplast transit peptide.

This sequence belongs to the UDPGP type 1 family. Mg(2+) is required as a cofactor.

It localises to the plastid. The protein resides in the chloroplast. It catalyses the reaction alpha-D-glucose 1-phosphate + UTP + H(+) = UDP-alpha-D-glucose + diphosphate. Inhibited by pyrophosphate. Involved in the biosynthesis of sulfolipids in the chloroplast. Catalyzes the first committed step in sulfolipid biosynthesis. Converts glucose 1-phosphate to UDP-glucose, the precursor of the polar head of sulfolipid. In addition to glucose 1-phosphate, can use galactose 1-phosphate, but with much lower activity. No uridyltransferase activity with other hexose monophosphates. Specific for UTP and cannot use ATP, CTP, and GTP. The sequence is that of UTP--glucose-1-phosphate uridylyltransferase 3, chloroplastic from Arabidopsis thaliana (Mouse-ear cress).